An 805-amino-acid chain; its full sequence is Leucine--tRNA ligase (805 aa).

Positions 40–51 match the 'HIGH' region motif; the sequence is PYPSGSGLHVGH. A 'KMSKS' region motif is present at residues 576–580; it reads KMSKS. Residue Lys579 participates in ATP binding.

This sequence belongs to the class-I aminoacyl-tRNA synthetase family.

The protein resides in the cytoplasm. It catalyses the reaction tRNA(Leu) + L-leucine + ATP = L-leucyl-tRNA(Leu) + AMP + diphosphate. The chain is Leucine--tRNA ligase from Chlorobium luteolum (strain DSM 273 / BCRC 81028 / 2530) (Pelodictyon luteolum).